The following is a 995-amino-acid chain: ATP-dependent RNA helicase DBP10 (995 aa).

A disordered region spans residues 1–120 (MAGVQKRKRD…TQTGDDEDDV (120 aa)). Acidic residues-rich tracts occupy residues 12–25 (EDQDDNGSEEDDIA) and 37–50 (SESDANDSDSEVEA). The segment covering 71-81 (VNNKKKAENKD) has biased composition (basic and acidic residues). Position 101 is a phosphoserine (Ser-101). Residues 137 to 165 (GSFPSFGLSKIVLNNIKRKGFRQPTPIQR) carry the Q motif motif. The 173-residue stretch at 168–340 (IPLILQSRDI…KAGLVNPVLV (173 aa)) folds into the Helicase ATP-binding domain. 181-188 (ARTGSGKT) is a binding site for ATP. A DEAD box motif is present at residues 288 to 291 (DEAD). Disordered regions lie at residues 389–427 (LQNSNNEADSDSDDENDRQKKRRNFKKEKFRKQKMPAAN) and 889–973 (GSRE…EQIR). Phosphoserine is present on residues Ser-398 and Ser-400. Basic residues-rich tracts occupy residues 407–422 (QKKRRNFKKEKFRKQK) and 914–924 (VRGKFKHKQMK). The region spanning 418 to 568 (FRKQKMPAAN…PMYDSLVDVM (151 aa)) is the Helicase C-terminal domain. Residues 964 to 973 (SELKSTEQIR) show a composition bias toward basic and acidic residues.

The protein belongs to the DEAD box helicase family. DDX54/DBP10 subfamily. In terms of assembly, interacts with RRP1 and associates with pre-ribosomal particles.

It is found in the nucleus. Its subcellular location is the nucleolus. The enzyme catalyses ATP + H2O = ADP + phosphate + H(+). ATP-binding RNA helicase involved in the biogenesis of 60S ribosomal subunits and is required for the normal formation of 25S and 5.8S rRNAs. This chain is ATP-dependent RNA helicase DBP10 (DBP10), found in Saccharomyces cerevisiae (strain YJM789) (Baker's yeast).